The sequence spans 267 residues: DNA repair protein RecO (267 aa).

This sequence belongs to the RecO family.

Its function is as follows. Involved in DNA repair and RecF pathway recombination. The polypeptide is DNA repair protein RecO (Prochlorococcus marinus (strain MIT 9313)).